The primary structure comprises 878 residues: Phosphoenolpyruvate carboxylase (878 aa).

Active-site residues include His-138 and Lys-545.

It belongs to the PEPCase type 1 family. Requires Mg(2+) as cofactor.

The enzyme catalyses oxaloacetate + phosphate = phosphoenolpyruvate + hydrogencarbonate. In terms of biological role, forms oxaloacetate, a four-carbon dicarboxylic acid source for the tricarboxylic acid cycle. The sequence is that of Phosphoenolpyruvate carboxylase from Shewanella halifaxensis (strain HAW-EB4).